Reading from the N-terminus, the 110-residue chain is NADH-quinone oxidoreductase subunit K (110 aa).

The next 3 helical transmembrane spans lie at 13–33, 38–58, and 70–90; these read VTHGLIFSTLLFVISVAGIII, ILILLMSIELMLLAVNTNFLI, and VFVFFIMAVAAAETAIGLAIV.

This sequence belongs to the complex I subunit 4L family. In terms of assembly, NDH-1 is composed of 14 different subunits. Subunits NuoA, H, J, K, L, M, N constitute the membrane sector of the complex.

Its subcellular location is the cell inner membrane. The catalysed reaction is a quinone + NADH + 5 H(+)(in) = a quinol + NAD(+) + 4 H(+)(out). NDH-1 shuttles electrons from NADH, via FMN and iron-sulfur (Fe-S) centers, to quinones in the respiratory chain. The immediate electron acceptor for the enzyme in this species is believed to be ubiquinone. Couples the redox reaction to proton translocation (for every two electrons transferred, four hydrogen ions are translocated across the cytoplasmic membrane), and thus conserves the redox energy in a proton gradient. In Francisella tularensis subsp. tularensis (strain FSC 198), this protein is NADH-quinone oxidoreductase subunit K.